Reading from the N-terminus, the 411-residue chain is Na(+)-translocating NADH-quinone reductase subunit F (411 aa).

A helical membrane pass occupies residues 6 to 26 (AIGGVAMFTLIIMGLVAIILA). Positions 35 to 129 (GDVTIHINDN…DMKIEIDPEF (95 aa)) constitute a 2Fe-2S ferredoxin-type domain. Residues cysteine 72, cysteine 78, cysteine 81, and cysteine 113 each coordinate [2Fe-2S] cluster. Residues 132–273 (VQKWECEVIS…SGPYGEFFAK (142 aa)) form the FAD-binding FR-type domain.

The protein belongs to the NqrF family. As to quaternary structure, composed of six subunits; NqrA, NqrB, NqrC, NqrD, NqrE and NqrF. [2Fe-2S] cluster is required as a cofactor. FAD serves as cofactor.

Its subcellular location is the cell inner membrane. It catalyses the reaction a ubiquinone + n Na(+)(in) + NADH + H(+) = a ubiquinol + n Na(+)(out) + NAD(+). Functionally, NQR complex catalyzes the reduction of ubiquinone-1 to ubiquinol by two successive reactions, coupled with the transport of Na(+) ions from the cytoplasm to the periplasm. The first step is catalyzed by NqrF, which accepts electrons from NADH and reduces ubiquinone-1 to ubisemiquinone by a one-electron transfer pathway. The protein is Na(+)-translocating NADH-quinone reductase subunit F of Psychrobacter cryohalolentis (strain ATCC BAA-1226 / DSM 17306 / VKM B-2378 / K5).